An 83-amino-acid chain; its full sequence is Mu-theraphotoxin-Hhn2k (83 aa).

Positions methionine 1–alanine 21 are cleaved as a signal peptide. Positions serine 22–arginine 48 are excised as a propeptide. Cystine bridges form between cysteine 50/cysteine 65, cysteine 57/cysteine 70, and cysteine 64/cysteine 77. Leucine 81 is subject to Leucine amide.

This sequence belongs to the neurotoxin 10 (Hwtx-1) family. 15 (Hntx-3) subfamily. As to quaternary structure, monomer. Expressed by the venom gland.

It localises to the secreted. Lethal neurotoxin. Selectively blocks tetrodotoxin-sensitive voltage-gated sodium channels (Nav). Does not affect tetrodotoxin-resistant voltage-gated sodium channels or calcium channels. This Cyriopagopus hainanus (Chinese bird spider) protein is Mu-theraphotoxin-Hhn2k.